Consider the following 265-residue polypeptide: Proteasome subunit alpha (265 aa).

The tract at residues 236–265 (EKDSKGSKGAQNPKGARDSKNSKSYGESTD) is disordered.

It belongs to the peptidase T1A family. In terms of assembly, the 20S proteasome core is composed of 14 alpha and 14 beta subunits that assemble into four stacked heptameric rings, resulting in a barrel-shaped structure. The two inner rings, each composed of seven catalytic beta subunits, are sandwiched by two outer rings, each composed of seven alpha subunits. The catalytic chamber with the active sites is on the inside of the barrel. Has a gated structure, the ends of the cylinder being occluded by the N-termini of the alpha-subunits. Is capped by the proteasome-associated ATPase, ARC.

It localises to the cytoplasm. The protein operates within protein degradation; proteasomal Pup-dependent pathway. With respect to regulation, the formation of the proteasomal ATPase ARC-20S proteasome complex, likely via the docking of the C-termini of ARC into the intersubunit pockets in the alpha-rings, may trigger opening of the gate for substrate entry. Interconversion between the open-gate and close-gate conformations leads to a dynamic regulation of the 20S proteasome proteolysis activity. In terms of biological role, component of the proteasome core, a large protease complex with broad specificity involved in protein degradation. This Mycobacterium leprae (strain Br4923) protein is Proteasome subunit alpha.